Here is a 554-residue protein sequence, read N- to C-terminus: Macrophage colony-stimulating factor 1 (554 aa).

The first 32 residues, 1-32 (MTAPGAAGRCPPTTWLGSLLLLVCLLASRSIT), serve as a signal peptide directing secretion. Residues 33–496 (EEVSEYCSHM…GSFSPQLQES (464 aa)) lie on the Lumenal side of the membrane. 3 cysteine pairs are disulfide-bonded: Cys-39–Cys-122, Cys-80–Cys-171, and Cys-134–Cys-178. Residues Asn-154 and Asn-172 are each glycosylated (N-linked (GlcNAc...) asparagine). The disordered stretch occupies residues 224–488 (EDSEGTEGSS…TGHERQSEGS (265 aa)). Phosphothreonine; by FAM20C is present on Thr-266. O-linked (Xyl...) (chondroitin sulfate) serine glycosylation is present at Ser-309. Over residues 344–354 (LSASSPLPASA) the composition is skewed to low complexity. 2 O-linked (GalNAc...) threonine glycosylation sites follow: Thr-363 and Thr-365. The segment covering 404–433 (RISSLRPQGLSNPSTLSAQPQLSRSHSSGS) has biased composition (polar residues). Residues 406-426 (SSLRPQGLSNPSTLSAQPQLS) form an O-glycosylated at one site region. The segment covering 440–453 (LEGRRSTRDRRSPA) has biased composition (basic and acidic residues). The helical transmembrane segment at 497–517 (VFHLLVPSVILVLLAVGGLLF) threads the bilayer. Residues 518–554 (YRWRRRSHQEPQRADSPLEQPEGSPLTQDDRQVELPV) are Cytoplasmic-facing. The tract at residues 526–554 (QEPQRADSPLEQPEGSPLTQDDRQVELPV) is disordered. Positions 545 to 554 (QDDRQVELPV) are enriched in basic and acidic residues.

Homodimer or heterodimer; disulfide-linked. Likely to exist in multiple forms: homodimer consisting of 2 identical 150-200 kDa proteoglycan subunits, heterodimer consisting of a 150-200 kDa proteoglycan subunit and a truncated 43 kDa subunit, and homodimer consisting of 2 identical 43 kDa subunits. Interacts with CSF1R. N-glycosylated. Post-translationally, O-glycosylated; contains chondroitin sulfate. O-glycosylated with core 1 or possibly core 8 glycans. In terms of processing, O-glycosylated.

The protein resides in the cell membrane. Its subcellular location is the secreted. The protein localises to the extracellular space. Cytokine that plays an essential role in the regulation of survival, proliferation and differentiation of hematopoietic precursor cells, especially mononuclear phagocytes, such as macrophages and monocytes. Promotes the release of pro-inflammatory chemokines, and thereby plays an important role in innate immunity and in inflammatory processes. Plays an important role in the regulation of osteoclast proliferation and differentiation, the regulation of bone resorption, and is required for normal bone development. Required for normal male and female fertility. Promotes reorganization of the actin cytoskeleton, regulates formation of membrane ruffles, cell adhesion and cell migration. Plays a role in lipoprotein clearance. This Homo sapiens (Human) protein is Macrophage colony-stimulating factor 1 (CSF1).